The chain runs to 484 residues: tRNA-2-methylthio-N(6)-dimethylallyladenosine synthase (484 aa).

Positions 36–153 (GKLYIKTHGC…LPELIRARRE (118 aa)) constitute an MTTase N-terminal domain. Positions 45, 82, 116, 190, 194, and 197 each coordinate [4Fe-4S] cluster. A Radical SAM core domain is found at 176-415 (RAEGPSAFVS…HISAHAASIS (240 aa)). Positions 416-479 (QSMVGSVQRV…SNSLRGRIQL (64 aa)) constitute a TRAM domain. Residues 428–450 (EGPSRRDPNELTGKSENMRPVNF) are disordered.

This sequence belongs to the methylthiotransferase family. MiaB subfamily. In terms of assembly, monomer. [4Fe-4S] cluster serves as cofactor.

The protein localises to the cytoplasm. It carries out the reaction N(6)-dimethylallyladenosine(37) in tRNA + (sulfur carrier)-SH + AH2 + 2 S-adenosyl-L-methionine = 2-methylsulfanyl-N(6)-dimethylallyladenosine(37) in tRNA + (sulfur carrier)-H + 5'-deoxyadenosine + L-methionine + A + S-adenosyl-L-homocysteine + 2 H(+). In terms of biological role, catalyzes the methylthiolation of N6-(dimethylallyl)adenosine (i(6)A), leading to the formation of 2-methylthio-N6-(dimethylallyl)adenosine (ms(2)i(6)A) at position 37 in tRNAs that read codons beginning with uridine. The protein is tRNA-2-methylthio-N(6)-dimethylallyladenosine synthase of Xanthomonas oryzae pv. oryzae (strain KACC10331 / KXO85).